A 471-amino-acid chain; its full sequence is Citrate synthase, mitochondrial (471 aa).

Residues 1-18 (MASLRSATALSRLRSRAG) constitute a mitochondrion transit peptide. Residues histidine 307, histidine 353, and aspartate 408 contribute to the active site.

This sequence belongs to the citrate synthase family. Homodimer.

It is found in the mitochondrion matrix. The catalysed reaction is oxaloacetate + acetyl-CoA + H2O = citrate + CoA + H(+). It functions in the pathway carbohydrate metabolism; tricarboxylic acid cycle; isocitrate from oxaloacetate: step 1/2. The polypeptide is Citrate synthase, mitochondrial (CIT) (Citrus maxima (Pomelo)).